A 968-amino-acid chain; its full sequence is RNA polymerase-associated protein RapA (968 aa).

Residues 164-334 (DVGRRHAPRV…FARLRLLDPS (171 aa)) enclose the Helicase ATP-binding domain. 177–184 (DEVGLGKT) contributes to the ATP binding site. The DEAH box motif lies at 280–283 (DEAH). In terms of domain architecture, Helicase C-terminal spans 490-644 (RVEWLMGHLT…TCPTGRAIYD (155 aa)).

This sequence belongs to the SNF2/RAD54 helicase family. RapA subfamily. In terms of assembly, interacts with the RNAP. Has a higher affinity for the core RNAP than for the holoenzyme. Its ATPase activity is stimulated by binding to RNAP.

In terms of biological role, transcription regulator that activates transcription by stimulating RNA polymerase (RNAP) recycling in case of stress conditions such as supercoiled DNA or high salt concentrations. Probably acts by releasing the RNAP, when it is trapped or immobilized on tightly supercoiled DNA. Does not activate transcription on linear DNA. Probably not involved in DNA repair. The protein is RNA polymerase-associated protein RapA of Citrobacter koseri (strain ATCC BAA-895 / CDC 4225-83 / SGSC4696).